A 353-amino-acid chain; its full sequence is Methylthioribose-1-phosphate isomerase (353 aa).

Catalysis depends on Asp241, which acts as the Proton donor.

Belongs to the eIF-2B alpha/beta/delta subunits family. MtnA subfamily.

Its subcellular location is the cytoplasm. It is found in the nucleus. The catalysed reaction is 5-(methylsulfanyl)-alpha-D-ribose 1-phosphate = 5-(methylsulfanyl)-D-ribulose 1-phosphate. It functions in the pathway amino-acid biosynthesis; L-methionine biosynthesis via salvage pathway; L-methionine from S-methyl-5-thio-alpha-D-ribose 1-phosphate: step 1/6. Catalyzes the interconversion of methylthioribose-1-phosphate (MTR-1-P) into methylthioribulose-1-phosphate (MTRu-1-P). The sequence is that of Methylthioribose-1-phosphate isomerase (mri1) from Danio rerio (Zebrafish).